Here is a 331-residue protein sequence, read N- to C-terminus: Putative peptidyl-prolyl cis-trans isomerase RC0542 (331 aa).

The disordered stretch occupies residues 33–54; it reads EQTASNNSSTDENQTSINNEPP. In terms of domain architecture, PPIase FKBP-type spans 128-226; that stretch reads GHVVTVFYQI…SNEVKIYDDE (99 aa).

It catalyses the reaction [protein]-peptidylproline (omega=180) = [protein]-peptidylproline (omega=0). The protein is Putative peptidyl-prolyl cis-trans isomerase RC0542 of Rickettsia conorii (strain ATCC VR-613 / Malish 7).